We begin with the raw amino-acid sequence, 205 residues long: GTP cyclohydrolase-2 (205 aa).

A GTP-binding site is contributed by 49-53 (RIHSE). Positions 54, 65, and 67 each coordinate Zn(2+). GTP contacts are provided by residues Gln70, 92 to 94 (EGR), and Thr114. The Proton acceptor role is filled by Asp126. Arg128 acts as the Nucleophile in catalysis. Positions 149 and 154 each coordinate GTP.

Belongs to the GTP cyclohydrolase II family. It depends on Zn(2+) as a cofactor.

The catalysed reaction is GTP + 4 H2O = 2,5-diamino-6-hydroxy-4-(5-phosphoribosylamino)-pyrimidine + formate + 2 phosphate + 3 H(+). It participates in cofactor biosynthesis; riboflavin biosynthesis; 5-amino-6-(D-ribitylamino)uracil from GTP: step 1/4. In terms of biological role, catalyzes the conversion of GTP to 2,5-diamino-6-ribosylamino-4(3H)-pyrimidinone 5'-phosphate (DARP), formate and pyrophosphate. The polypeptide is GTP cyclohydrolase-2 (Shewanella amazonensis (strain ATCC BAA-1098 / SB2B)).